A 47-amino-acid polypeptide reads, in one-letter code: Thionin (47 aa).

4 disulfides stabilise this stretch: Cys3–Cys41, Cys4–Cys33, Cys12–Cys31, and Cys16–Cys27.

This sequence belongs to the plant thionin (TC 1.C.44) family. 4 C-C subfamily.

The protein localises to the secreted. Its function is as follows. Thionins are small plant proteins which are toxic to animal cells. They seem to exert their toxic effect at the level of the cell membrane. Their precise function is not known. The polypeptide is Thionin (THI1) (Pyrularia pubera (Buffalo nut)).